A 341-amino-acid chain; its full sequence is Aromatic amino acid aminotransferase (341 aa).

An N6-(pyridoxal phosphate)lysine modification is found at Lys-213.

The protein belongs to the class-II pyridoxal-phosphate-dependent aminotransferase family. As to quaternary structure, homodimer. Pyridoxal 5'-phosphate is required as a cofactor.

It carries out the reaction an aromatic L-alpha-amino acid + 2-oxoglutarate = an aromatic oxo-acid + L-glutamate. Its function is as follows. Aminotransferase that catalyzes the conversion of aromatic amino acids and 2-oxoglutarate into corresponding aromatic oxo acids and L-glutamate. This chain is Aromatic amino acid aminotransferase, found in Corynebacterium glutamicum (strain R).